We begin with the raw amino-acid sequence, 197 residues long: Small ribosomal subunit protein uS4A (197 aa).

One can recognise an S4 RNA-binding domain in the interval 107–181 (RRLQTQVYKL…VARRNAARKA (75 aa)). Positions 160–197 (PTSPFGGARPGRVARRNAARKAEASGEAADEADEADEE) are disordered. A Glycyl lysine isopeptide (Lys-Gly) (interchain with G-Cter in ubiquitin) cross-link involves residue Lys180. Position 184 is a phosphoserine (Ser184). The segment covering 187 to 197 (AADEADEADEE) has biased composition (acidic residues).

This sequence belongs to the universal ribosomal protein uS4 family. In terms of assembly, component of the small ribosomal subunit (SSU). Mature yeast ribosomes consist of a small (40S) and a large (60S) subunit. The 40S small subunit contains 1 molecule of ribosomal RNA (18S rRNA) and 33 different proteins (encoded by 57 genes). The large 60S subunit contains 3 rRNA molecules (25S, 5.8S and 5S rRNA) and 46 different proteins (encoded by 81 genes). Interacts with snoRNA U3. uS11 interacts with MPP10. Component of the ribosomal small subunit (SSU) processome composed of at least 40 protein subunits and snoRNA U3.

The protein resides in the cytoplasm. It is found in the nucleus. It localises to the nucleolus. Component of the ribosome, a large ribonucleoprotein complex responsible for the synthesis of proteins in the cell. The small ribosomal subunit (SSU) binds messenger RNAs (mRNAs) and translates the encoded message by selecting cognate aminoacyl-transfer RNA (tRNA) molecules. The large subunit (LSU) contains the ribosomal catalytic site termed the peptidyl transferase center (PTC), which catalyzes the formation of peptide bonds, thereby polymerizing the amino acids delivered by tRNAs into a polypeptide chain. The nascent polypeptides leave the ribosome through a tunnel in the LSU and interact with protein factors that function in enzymatic processing, targeting, and the membrane insertion of nascent chains at the exit of the ribosomal tunnel. uS4 is involved in nucleolar processing of pre-18S ribosomal RNA and ribosome assembly. This is Small ribosomal subunit protein uS4A from Saccharomyces cerevisiae (strain ATCC 204508 / S288c) (Baker's yeast).